A 178-amino-acid chain; its full sequence is Ras-like protein (178 aa).

1-6 (GGVGKS) lines the GTP pocket. The Effector region signature appears at 21–29 (YDPTIEDSY). Residues 46–50 (DTAGQ) and 105–108 (NKCD) contribute to the GTP site. Position 175 is a cysteine methyl ester (Cys-175). Residue Cys-175 is the site of S-geranylgeranyl cysteine attachment. A propeptide spans 176–178 (SIL) (removed in mature form).

It belongs to the small GTPase superfamily. Ras family.

The protein resides in the cell membrane. It carries out the reaction GTP + H2O = GDP + phosphate + H(+). With respect to regulation, alternates between an inactive form bound to GDP and an active form bound to GTP. Activated by a guanine nucleotide-exchange factor (GEF) and inactivated by a GTPase-activating protein (GAP). In terms of biological role, ras proteins bind GDP/GTP and possess intrinsic GTPase activity. This chain is Ras-like protein, found in Artemia salina (Brine shrimp).